The sequence spans 447 residues: UPF0210 protein lhv_0606 (447 aa).

It belongs to the UPF0210 family. As to quaternary structure, homodimer.

The sequence is that of UPF0210 protein lhv_0606 from Lactobacillus helveticus (strain DPC 4571).